The following is a 757-amino-acid chain: Xylosyl- and glucuronyltransferase LARGE1 (757 aa).

Residues 1–10 (MLGMCRGRRK) are Cytoplasmic-facing. The chain crosses the membrane as a helical; Signal-anchor for type II membrane protein span at residues 11-31 (FVAASLALIFIPALTWLYLSS). The Lumenal portion of the chain corresponds to 32–757 (ANITVKPLPL…LKYMTVDNNS (726 aa)). A coiled-coil region spans residues 50 to 82 (AVVGAAAEHQSLELRLRDVEEHNNALRREISRT). The disordered stretch occupies residues 76–127 (RREISRTPRVPTHSSHPSSSRHGNQLHTHSTEEGTGDSEAKKGAAAGNSSDC). Over residues 82–97 (TPRVPTHSSHPSSSRH) the composition is skewed to low complexity. N-linked (GlcNAc...) asparagine glycans are attached at residues asparagine 123 and asparagine 149. The tract at residues 139-414 (IHIAIVCAGY…FLEYDGNLLR (276 aa)) is xylosyltransferase activity. Mn(2+) is bound by residues aspartate 243 and aspartate 245. The N-linked (GlcNAc...) asparagine glycan is linked to asparagine 273. Residues 415 to 757 (RELFGCPSET…LKYMTVDNNS (343 aa)) are glucuronyltransferase activity. Positions 564 and 566 each coordinate Mn(2+). An N-linked (GlcNAc...) asparagine glycan is attached at asparagine 738.

In the C-terminal section; belongs to the glycosyltransferase 49 family. It in the N-terminal section; belongs to the glycosyltransferase 8 family. Mn(2+) is required as a cofactor.

The protein localises to the golgi apparatus membrane. The enzyme catalyses 3-O-[beta-D-GlcA-(1-&gt;3)-beta-D-Xyl-(1-&gt;4)-Rib-ol-P-Rib-ol-P-3-beta-D-GalNAc-(1-&gt;3)-beta-D-GlcNAc-(1-&gt;4)-(O-6-P-alpha-D-Man)]-Thr-[protein] + UDP-alpha-D-xylose = 3-O-[alpha-D-Xyl-(1-&gt;3)-beta-D-GlcA-(1-&gt;4)-beta-D-Xyl-(1-&gt;4)-Rib-ol-P-Rib-ol-P-3-beta-D-GalNAc-(1-&gt;3)-beta-D-GlcNAc-(1-&gt;4)-(O-6-P-alpha-D-Man)]-Thr-[protein] + UDP + H(+). The catalysed reaction is 3-O-{(1-&gt;[3)-alpha-D-Xyl-(1-&gt;3)-beta-D-GlcA-(1-&gt;](n)-4)-beta-D-Xyl-(1-&gt;4)-Rib-ol-P-Rib-ol-P-3-beta-D-GalNAc-(1-&gt;3)-beta-D-GlcNAc-(1-&gt;4)-O-6-P-alpha-D-Man}-L-Thr-[protein] + UDP-alpha-D-glucuronate = 3-O-{beta-D-GlcA-(1-&gt;[3)-alpha-D-Xyl-(1-&gt;3)-beta-D-GlcA-(1-&gt;](n)-4)-beta-D-Xyl-(1-&gt;4)-Rib-ol-P-Rib-ol-P-3-beta-D-GalNAc-(1-&gt;3)-beta-D-GlcNAc-(1-&gt;4)-O-6-P-alpha-D-Man}-L-Thr-[protein] + UDP + H(+). It carries out the reaction 3-O-{beta-D-GlcA-(1-&gt;[3)-alpha-D-Xyl-(1-&gt;3)-beta-D-GlcA-(1-&gt;](n)-4)-beta-D-Xyl-(1-&gt;4)-Rib-ol-P-Rib-ol-P-3-beta-D-GalNAc-(1-&gt;3)-beta-D-GlcNAc-(1-&gt;4)-O-6-P-alpha-D-Man}-L-Thr-[protein] + UDP-alpha-D-xylose = 3-O-{(1-&gt;[3)-alpha-D-Xyl-(1-&gt;3)-beta-D-GlcA-(1-&gt;](n+1)-4)-beta-D-Xyl-(1-&gt;4)-Rib-ol-P-Rib-ol-P-3-beta-D-GalNAc-(1-&gt;3)-beta-D-GlcNAc-(1-&gt;4)-O-6-P-alpha-D-Man}-L-Thr-[protein] + UDP + H(+). The protein operates within protein modification; protein glycosylation. Bifunctional glycosyltransferase with both alpha-1,3-xylosyltransferase and beta-1,3-glucuronyltransferase activities involved in the maturation of alpha-dystroglycan (DAG1) by glycosylation leading to DAG1 binding to laminin G-like domain-containing extracellular proteins with high affinity. Elongates the glucuronyl-beta-1,4-xylose-beta disaccharide primer structure initiated by B4GAT1 by adding repeating units [-3-Xylose-alpha-1,3-GlcA-beta-1-] to produce a heteropolysaccharide. Requires the phosphorylation of core M3 (O-mannosyl trisaccharide) by POMK to elongate the glucuronyl-beta-1,4-xylose-beta disaccharide primer. Plays a key role in skeletal muscle function and regeneration. The protein is Xylosyl- and glucuronyltransferase LARGE1 of Danio rerio (Zebrafish).